The sequence spans 202 residues: UDP-N-acetylglucosamine transferase subunit ALG13 (202 aa).

The protein belongs to the glycosyltransferase 28 family. In terms of assembly, heterodimer with ALG14 to form a functional enzyme.

The protein resides in the endoplasmic reticulum. It catalyses the reaction an N-acetyl-alpha-D-glucosaminyl-diphospho-di-trans,poly-cis-dolichol + UDP-N-acetyl-alpha-D-glucosamine = an N,N'-diacetylchitobiosyl-diphospho-di-trans,poly-cis-dolichol + UDP + H(+). Functionally, involved in protein N-glycosylation. Essential for the second step of the dolichol-linked oligosaccharide pathway. The polypeptide is UDP-N-acetylglucosamine transferase subunit ALG13 (ALG13) (Saccharomyces cerevisiae (strain ATCC 204508 / S288c) (Baker's yeast)).